Consider the following 77-residue polypeptide: Homeodomain-only protein (77 aa).

The homeobox; degenerate DNA-binding region spans 7–65; it reads AALGVRLTEDQVKVLEENFTKVSKHPDETTLMLIAAECGLSEEQTAVWFRMRNAQWRKA.

The protein resides in the nucleus. It localises to the cytoplasm. In terms of biological role, atypical homeodomain protein which does not bind DNA and is required to modulate cardiac growth and development. May act via an interaction with SRF, leading to modulate the expression of SRF-dependent cardiac-specific genes and cardiac development. May act as a co-chaperone for HSPA1A and HSPA1B chaperone proteins and assist in chaperone-mediated protein refolding. This chain is Homeodomain-only protein (hopx), found in Danio rerio (Zebrafish).